Consider the following 289-residue polypeptide: tRNA-cytidine(32) 2-sulfurtransferase (289 aa).

The short motif at 49-54 is the PP-loop motif element; the sequence is SGGKDS. [4Fe-4S] cluster contacts are provided by Cys-124, Cys-127, and Cys-215.

This sequence belongs to the TtcA family. Homodimer. Mg(2+) serves as cofactor. It depends on [4Fe-4S] cluster as a cofactor.

The protein resides in the cytoplasm. The catalysed reaction is cytidine(32) in tRNA + S-sulfanyl-L-cysteinyl-[cysteine desulfurase] + AH2 + ATP = 2-thiocytidine(32) in tRNA + L-cysteinyl-[cysteine desulfurase] + A + AMP + diphosphate + H(+). Its pathway is tRNA modification. Its function is as follows. Catalyzes the ATP-dependent 2-thiolation of cytidine in position 32 of tRNA, to form 2-thiocytidine (s(2)C32). The sulfur atoms are provided by the cysteine/cysteine desulfurase (IscS) system. This Methylococcus capsulatus (strain ATCC 33009 / NCIMB 11132 / Bath) protein is tRNA-cytidine(32) 2-sulfurtransferase.